Consider the following 193-residue polypeptide: CASP-like protein 1F3 (193 aa).

The segment at 1-25 (MASPQNTSQKRFFQANSPGGMPTAS) is disordered. Residues 1 to 35 (MASPQNTSQKRFFQANSPGGMPTASQSQRSRILAQ) lie on the Cytoplasmic side of the membrane. A helical membrane pass occupies residues 36 to 56 (ITLRFLAIAFTVTAIPVMITA). Residues 57–78 (KEPVSLLGLAITPSYKQSSAMK) are Extracellular-facing. The chain crosses the membrane as a helical span at residues 79–99 (FLLGVNATVFAFTALSMLFVW). Over 100 to 118 (PLRRSGSKPINYFFLHLHD) the chain is Cytoplasmic. A helical transmembrane segment spans residues 119 to 139 (MVMTLLLISGCAAATAVGYLS). The Extracellular portion of the chain corresponds to 140 to 161 (QYGQPETYWSPICDIVKKFCHQ). Residues 162–182 (MLISTVLSYLAFFCYLALNIL) form a helical membrane-spanning segment. Residues 183–193 (SVHKLMSRATE) lie on the Cytoplasmic side of the membrane.

This sequence belongs to the Casparian strip membrane proteins (CASP) family. In terms of assembly, homodimer and heterodimers.

Its subcellular location is the cell membrane. The protein is CASP-like protein 1F3 of Populus trichocarpa (Western balsam poplar).